Reading from the N-terminus, the 200-residue chain is Lipopolysaccharide core heptose(II)-phosphate phosphatase (200 aa).

A signal peptide spans 1-25; it reads MLAFCRSSLKSKKYFIILLALAAIA.

The protein belongs to the phosphoglycerate mutase family. Ais subfamily.

The protein resides in the periplasm. It participates in bacterial outer membrane biogenesis; lipopolysaccharide metabolism. In terms of biological role, catalyzes the dephosphorylation of heptose(II) of the outer membrane lipopolysaccharide core. This Escherichia coli O157:H7 protein is Lipopolysaccharide core heptose(II)-phosphate phosphatase.